Reading from the N-terminus, the 254-residue chain is 5-oxoprolinase subunit A (254 aa).

This sequence belongs to the LamB/PxpA family. In terms of assembly, forms a complex composed of PxpA, PxpB and PxpC.

The enzyme catalyses 5-oxo-L-proline + ATP + 2 H2O = L-glutamate + ADP + phosphate + H(+). Catalyzes the cleavage of 5-oxoproline to form L-glutamate coupled to the hydrolysis of ATP to ADP and inorganic phosphate. The protein is 5-oxoprolinase subunit A of Acinetobacter baylyi (strain ATCC 33305 / BD413 / ADP1).